We begin with the raw amino-acid sequence, 310 residues long: Homoserine kinase (310 aa).

91–101 (PIGSGLGSSAC) contributes to the ATP binding site.

This sequence belongs to the GHMP kinase family. Homoserine kinase subfamily.

The protein localises to the cytoplasm. The enzyme catalyses L-homoserine + ATP = O-phospho-L-homoserine + ADP + H(+). It participates in amino-acid biosynthesis; L-threonine biosynthesis; L-threonine from L-aspartate: step 4/5. Functionally, catalyzes the ATP-dependent phosphorylation of L-homoserine to L-homoserine phosphate. In Escherichia coli O157:H7, this protein is Homoserine kinase.